The primary structure comprises 414 residues: eIF5-mimic protein 1 (414 aa).

The segment at 1-22 is disordered; the sequence is MNKNQKPVLTGQRFKTRKRDEK. The W2 domain maps to 248–414; the sequence is VQQSLGTRKE…LQNAEEEFRI (167 aa).

It belongs to the BZW family.

The protein resides in the cytoplasm. Translation initiation regulator which may repress non-AUG initiated translation and repeat-associated non-AUG (RAN) initiated translation by acting as a competitive inhibitor of eukaryotic translation initiation factor 5 (EIF5) function. This chain is eIF5-mimic protein 1 (BZW2), found in Gallus gallus (Chicken).